Here is a 407-residue protein sequence, read N- to C-terminus: Phosphopentomutase (407 aa).

Mn(2+) contacts are provided by aspartate 10, aspartate 306, histidine 311, aspartate 347, histidine 348, and histidine 359.

This sequence belongs to the phosphopentomutase family. Mn(2+) serves as cofactor.

The protein localises to the cytoplasm. It catalyses the reaction 2-deoxy-alpha-D-ribose 1-phosphate = 2-deoxy-D-ribose 5-phosphate. The enzyme catalyses alpha-D-ribose 1-phosphate = D-ribose 5-phosphate. The protein operates within carbohydrate degradation; 2-deoxy-D-ribose 1-phosphate degradation; D-glyceraldehyde 3-phosphate and acetaldehyde from 2-deoxy-alpha-D-ribose 1-phosphate: step 1/2. Its function is as follows. Isomerase that catalyzes the conversion of deoxy-ribose 1-phosphate (dRib-1-P) and ribose 1-phosphate (Rib-1-P) to deoxy-ribose 5-phosphate (dRib-5-P) and ribose 5-phosphate (Rib-5-P), respectively. The protein is Phosphopentomutase of Sodalis glossinidius (strain morsitans).